A 213-amino-acid polypeptide reads, in one-letter code: Pyrrolidone-carboxylate peptidase (213 aa).

Active-site residues include Glu-78, Cys-141, and His-165.

This sequence belongs to the peptidase C15 family. Homotetramer.

The protein localises to the cytoplasm. It catalyses the reaction Release of an N-terminal pyroglutamyl group from a polypeptide, the second amino acid generally not being Pro.. Its function is as follows. Removes 5-oxoproline from various penultimate amino acid residues except L-proline. The polypeptide is Pyrrolidone-carboxylate peptidase (Clostridium botulinum (strain Alaska E43 / Type E3)).